The sequence spans 376 residues: Ribosomal RNA large subunit methyltransferase G (376 aa).

This sequence belongs to the methyltransferase superfamily. RlmG family.

The protein resides in the cytoplasm. It carries out the reaction guanosine(1835) in 23S rRNA + S-adenosyl-L-methionine = N(2)-methylguanosine(1835) in 23S rRNA + S-adenosyl-L-homocysteine + H(+). In terms of biological role, specifically methylates the guanine in position 1835 (m2G1835) of 23S rRNA. This is Ribosomal RNA large subunit methyltransferase G from Cronobacter sakazakii (strain ATCC BAA-894) (Enterobacter sakazakii).